A 448-amino-acid chain; its full sequence is N-succinylarginine dihydrolase (448 aa).

Residues 19–28 (GGLSYGNVAS), Asn-110, and 137–138 (HR) each bind substrate. The active site involves Glu-174. Position 214 (Arg-214) interacts with substrate. His-250 is a catalytic residue. Substrate is bound by residues Asp-252 and Asn-365. The active-site Nucleophile is the Cys-371.

Belongs to the succinylarginine dihydrolase family. Homodimer.

The catalysed reaction is N(2)-succinyl-L-arginine + 2 H2O + 2 H(+) = N(2)-succinyl-L-ornithine + 2 NH4(+) + CO2. The protein operates within amino-acid degradation; L-arginine degradation via AST pathway; L-glutamate and succinate from L-arginine: step 2/5. In terms of biological role, catalyzes the hydrolysis of N(2)-succinylarginine into N(2)-succinylornithine, ammonia and CO(2). The polypeptide is N-succinylarginine dihydrolase (Pseudomonas fluorescens (strain ATCC BAA-477 / NRRL B-23932 / Pf-5)).